A 170-amino-acid chain; its full sequence is N-glycosidase R617 (170 aa).

Belongs to the YbiA family.

It catalyses the reaction 2,5-diamino-6-hydroxy-4-(5-phosphoribosylamino)-pyrimidine + H2O = 2,5,6-triamino-4-hydroxypyrimidine + D-ribose 5-phosphate. The enzyme catalyses 5-amino-6-(5-phospho-D-ribosylamino)uracil + H2O = 5,6-diaminouracil + D-ribose 5-phosphate. Functionally, catalyzes the hydrolysis of the N-glycosidic bond in the first two intermediates of riboflavin biosynthesis, which are highly reactive metabolites, yielding relatively innocuous products. Thus, can divert a surplus of harmful intermediates into relatively harmless products and pre-empt the damage these intermediates would otherwise do. May act on other substrates in vivo. In Acanthamoeba polyphaga mimivirus (APMV), this protein is N-glycosidase R617.